Consider the following 143-residue polypeptide: MFYGEYQHSVDAKGRVIIPSKFREGLGEKFILTKGLDNCLFAYSLEEWSNLEAKLRSLPFTDKDVRAFVRFFFAGAAEVEVDKQGRILIPQNLREYAGLEKDVYIIGVSTRVEVWDKSKWESYSGDENMSAESIAEKMAMLGI.

SpoVT-AbrB domains lie at E5–E47 and A76–K119.

It belongs to the MraZ family. In terms of assembly, forms oligomers.

It localises to the cytoplasm. It is found in the nucleoid. The protein is Transcriptional regulator MraZ of Acetivibrio thermocellus (strain ATCC 27405 / DSM 1237 / JCM 9322 / NBRC 103400 / NCIMB 10682 / NRRL B-4536 / VPI 7372) (Clostridium thermocellum).